We begin with the raw amino-acid sequence, 255 residues long: Probable transcriptional regulatory protein Rcas_0718 (255 aa).

This sequence belongs to the TACO1 family.

It is found in the cytoplasm. The chain is Probable transcriptional regulatory protein Rcas_0718 from Roseiflexus castenholzii (strain DSM 13941 / HLO8).